The chain runs to 363 residues: 1,2-Dihydrovomilenine reductase (363 aa).

Positions 24 to 352 constitute an Enoyl reductase (ER) domain; it reads GILSPFKFSR…KGDVRYRFVI (329 aa). Cysteine 51 provides a ligand contact to Zn(2+). An NADP(+)-binding site is contributed by serine 53. Aspartate 54, glutamate 74, cysteine 104, cysteine 107, cysteine 110, and cysteine 118 together coordinate Zn(2+). NADP(+) is bound by residues leucine 193, glycine 195, leucine 196, serine 215, threonine 216, serine 217, lysine 220, lysine 221, valine 278, alanine 280, threonine 302, and arginine 349.

This sequence belongs to the zinc-containing alcohol dehydrogenase family. Class-P subfamily. As to quaternary structure, homodimer. The cofactor is Zn(2+). Mainly expressed in mature roots and, to a lower extent, in stems and leaves.

It is found in the cytoplasm. The catalysed reaction is 17-O-acetylnorajmaline + NADP(+) = (2R)-1,2-dihydrovomilenine + NADPH + 2 H(+). It carries out the reaction (20S)-19,20-dihydrovomilenine + NADP(+) = vomilenine + NADPH + H(+). It participates in alkaloid biosynthesis; ajmaline biosynthesis. Its function is as follows. Alcohol dehydrogenase involved in the biosynthesis of ajmaline-type monoterpenoid indole alkaloids (MIAs) natural products, important plant-derived pharmaceuticals used in the therapy of heart disorders. Catalyzes the conversion of 1,2-dihydrovomilenine to 17-O-acetylnorajmaline, an intermediate chemical in the biosynthesis of ajmaline. Also able, with a lower efficiency, to convert vomilenine into 19,20-dihydrovomilenine. In Rauvolfia serpentina (Serpentine wood), this protein is 1,2-Dihydrovomilenine reductase.